The sequence spans 185 residues: Ribosome-recycling factor (185 aa).

This sequence belongs to the RRF family.

The protein resides in the cytoplasm. Responsible for the release of ribosomes from messenger RNA at the termination of protein biosynthesis. May increase the efficiency of translation by recycling ribosomes from one round of translation to another. The protein is Ribosome-recycling factor of Photobacterium profundum (strain SS9).